The chain runs to 297 residues: Guanylate kinase (297 aa).

Positions 4-183 (GKMIIISGPS…AVAKITDVLH (180 aa)) constitute a Guanylate kinase-like domain. An ATP-binding site is contributed by 11–18 (GPSGVGKG). The unknown stretch occupies residues 204-297 (EQIVKEKYMY…EQKHYNNDEF (94 aa)).

The protein belongs to the guanylate kinase family.

Its subcellular location is the cytoplasm. The enzyme catalyses GMP + ATP = GDP + ADP. Its function is as follows. Essential for recycling GMP and indirectly, cGMP. This chain is Guanylate kinase (gmk), found in Mycoplasma mycoides subsp. mycoides SC (strain CCUG 32753 / NCTC 10114 / PG1).